A 460-amino-acid chain; its full sequence is UDP-N-acetylmuramoylalanine--D-glutamate ligase (460 aa).

120–126 (GSNGKTT) is a binding site for ATP.

This sequence belongs to the MurCDEF family.

The protein localises to the cytoplasm. It catalyses the reaction UDP-N-acetyl-alpha-D-muramoyl-L-alanine + D-glutamate + ATP = UDP-N-acetyl-alpha-D-muramoyl-L-alanyl-D-glutamate + ADP + phosphate + H(+). It functions in the pathway cell wall biogenesis; peptidoglycan biosynthesis. Functionally, cell wall formation. Catalyzes the addition of glutamate to the nucleotide precursor UDP-N-acetylmuramoyl-L-alanine (UMA). This chain is UDP-N-acetylmuramoylalanine--D-glutamate ligase, found in Lactobacillus delbrueckii subsp. bulgaricus (strain ATCC BAA-365 / Lb-18).